Reading from the N-terminus, the 1016-residue chain is Poly [ADP-ribose] polymerase 1 (1016 aa).

A2 carries the post-translational modification N-acetylalanine. The PARP-type 1 zinc-finger motif lies at 9–93; the sequence is YRVEYAKSGR…TIKKMAETGG (85 aa). Residues C21 and C24 each coordinate Zn(2+). S41 carries the post-translational modification Phosphoserine. Residues H53 and C56 each coordinate Zn(2+). N6-acetyllysine is present on residues K100 and K108. The segment at 116 to 206 adopts a PARP-type 2 zinc-finger fold; the sequence is FGAGYAKSNR…TLKKQLPAIK (91 aa). Residues C128 and C131 each contribute to the Zn(2+) site. K134 carries the N6-acetyllysine modification. Residues H162 and C165 each coordinate Zn(2+). Residues S180 and S188 each carry the phosphoserine modification. K206 is covalently cross-linked (Glycyl lysine isopeptide (Lys-Gly) (interchain with G-Cter in SUMO1); alternate). Residue K206 forms a Glycyl lysine isopeptide (Lys-Gly) (interchain with G-Cter in SUMO2); alternate linkage. Short sequence motifs (nuclear localization signal) lie at residues 210–212 and 224–229; these read KRK and KKKSKK. Positions 228–362 constitute a PADR1 zinc-binding domain; that stretch reads KKEKDKEIKL…IKKQDRIFPP (135 aa). K252 participates in a covalent cross-link: Glycyl lysine isopeptide (Lys-Gly) (interchain with G-Cter in SUMO2). 2 positions are modified to phosphoserine: S277 and S280. Positions 293 to 335 are zinc ribbon; sequence GALLPCEECSGQLVFKGDAYYCTGDVTAWTKCMVKTQTPNRKE. C298, C301, C314, and C324 together coordinate Zn(2+). The disordered stretch occupies residues 360–390; sequence FPPESSTPVGAAAPPSAASAPAAVHSGPPDK. Over residues 365–386 the composition is skewed to low complexity; the sequence is STPVGAAAPPSAASAPAAVHSG. Residues 376 to 526 form an automodification domain region; it reads AASAPAAVHS…GTNKSEKRMK (151 aa). The 92-residue stretch at 387–478 folds into the BRCT domain; sequence PPDKPLSNMK…KSLQELLSTH (92 aa). The residue at position 389 (D389) is a PolyADP-ribosyl aspartic acid. 7 positions are modified to polyADP-ribosyl glutamic acid: E409, E415, E437, E446, E447, E450, and E458. K469 participates in a covalent cross-link: Glycyl lysine isopeptide (Lys-Gly) (interchain with G-Cter in SUMO2). PolyADP-ribosyl glutamic acid is present on residues E473 and E486. A Glycyl lysine isopeptide (Lys-Gly) (interchain with G-Cter in SUMO1); alternate cross-link involves residue K488. A Glycyl lysine isopeptide (Lys-Gly) (interchain with G-Cter in SUMO2); alternate cross-link involves residue K488. 2 positions are modified to polyADP-ribosyl glutamic acid: E490 and E493. The interval 494–523 is disordered; it reads AVGPKGKSGAAPSKKSKGPVKEEGTNKSEK. Residues 496–506 show a composition bias toward low complexity; sequence GPKGKSGAAPS. ADP-ribosylserine is present on residues S501, S506, and S509. Residues 512 to 523 show a composition bias toward basic and acidic residues; sequence PVKEEGTNKSEK. Residue K514 forms a Glycyl lysine isopeptide (Lys-Gly) (interchain with G-Cter in SUMO2) linkage. E515 and E516 each carry polyADP-ribosyl glutamic acid. S521 carries the ADP-ribosylserine modification. At E522 the chain carries PolyADP-ribosyl glutamic acid. K523 carries the post-translational modification N6-(ADP-ribosyl)lysine. A Glycyl lysine isopeptide (Lys-Gly) (interchain with G-Cter in SUMO2) cross-link involves residue K530. A WGR domain is found at 544 to 640; it reads NAHVLEKGGK…KNFTKHPKKF (97 aa). T596 carries the phosphothreonine modification. 2 positions are modified to N6-acetyllysine: K602 and K623. A PARP alpha-helical domain is found at 664–781; the sequence is KSKLPKPVQN…DIEVAYSLLR (118 aa). K750 participates in a covalent cross-link: Glycyl lysine isopeptide (Lys-Gly) (interchain with G-Cter in SUMO1); alternate. Residue K750 forms a Glycyl lysine isopeptide (Lys-Gly) (interchain with G-Cter in SUMO2); alternate linkage. S784 and S788 each carry phosphoserine. Residues 790-1016 form the PARP catalytic domain; the sequence is DPIDVNYEKL…LKFNFKTSLW (227 aa). Residues 864–866, G873, R880, and S906 each bind NAD(+); that span reads HGS. E990 (for poly [ADP-ribose] polymerase activity) is an active-site residue.

The protein belongs to the ARTD/PARP family. Homodimer; PARP-type zinc-fingers from separate PARP1 molecules form a dimer module that specifically recognizes DNA strand breaks. Heterodimer; heterodimerizes with PARP2. Interacts (via the PARP catalytic domain) with HPF1. Interacts with NMNAT1. Interacts with nucleosomes; with a preference for nucleosomes containing H2A.X. Interacts with APTX. Component of a base excision repair (BER) complex, containing at least XRCC1, PARP1, PARP2, POLB and LRIG3. Interacts with SRY. The SWAP complex consists of NPM1, NCL, PARP1 and SWAP70. Interacts with TIAM2. Interacts with PARP3; leading to activate PARP1 in absence of DNA. Interacts (when poly-ADP-ribosylated) with CHD1L (via macro domain). Interacts with the DNA polymerase alpha catalytic subunit POLA1; this interaction functions as part of the control of replication fork progression. Interacts with EEF1A1 and TXK. Interacts with RNF4. Interacts with RNF146. Interacts with ZNF423. Interacts with APLF. Interacts with SNAI1 (via zinc fingers); the interaction requires SNAI1 to be poly-ADP-ribosylated and non-phosphorylated (active) by GSK3B. Interacts (when poly-ADP-ribosylated) with PARP9. Interacts with NR4A3; activates PARP1 by improving acetylation of PARP1 and suppressing the interaction between PARP1 and SIRT1. Interacts (via catalytic domain) with PUM3; the interaction inhibits the poly-ADP-ribosylation activity of PARP1 and the degradation of PARP1 by CASP3 following genotoxic stress. Interacts with ZNF365. Interacts with RRP1B. Interacts with TIMELESS; the interaction is direct. Interacts with CGAS; leading to impede the formation of the PARP1-TIMELESS complex. Interacts with KHDC3L, the interaction is increased following the formation of DNA double-strand breaks. Interacts (when auto-poly-ADP-ribosylated) with XRCC1; leading to inhibit PARP1 ADP-ribosyltransferase activity. Interacts with SPINDOC; promoting PARP1 ADP-ribosyltransferase activity. Interacts with BANF1; leading to inhibit PARP1 ADP-ribosyltransferase activity in response to oxidative DNA damage. Interacts (when sumoylated and ubiquitinated) with VCP/p97; leading to its extraction from chromatin. Interacts with YARS1; promoting PARP1 ADP-ribosyltransferase activity. Interacts with PACMP micropeptide; Interacts with PACMP micropeptide; interaction. Interacts (when poly-ADP-ribosylated) with isoform 1 of MACROH2A1; MACROH2A1 specifically binds to poly-ADP-ribose chains and inhibits PARP1 activity, limiting the consumption of nuclear NAD(+). Interacts with CARM1; promoting recruitment to replication forks. Interacts with RECQL. Interacts with ZNF32; the interaction reshapes ZNF432 interacting proteins. Interacts with TPRN; TPRN interacts with a number of DNA damage response proteins, is recruited to sites of DNA damage and may play a role in DNA damage repair. As to quaternary structure, interacts (when auto-poly-ADP-ribosylated) with AIFM1. In terms of processing, poly-ADP-ribosylated on serine, glutamate and aspartate residues by autocatalysis. Auto-ADP-ribosylation on serine takes place following interaction with HPF1. Auto poly-ADP-ribosylation on serine residues promotes its dissociation from chromatin. Poly-ADP-ribosylated by PARP2; poly-ADP-ribosylation mediates the recruitment of CHD1L to DNA damage sites. Mono-ADP-ribosylated at Lys-523 by SIRT6 in response to oxidative stress, promoting recruitment to double-strand breaks (DSBs) sites. S-nitrosylated, leading to inhibit transcription regulation activity. Post-translationally, phosphorylated at Thr-596 by PRKDC in response to DNA damage following virus infection, promoting its translocation to the cytosol. Phosphorylated by TXK. In terms of processing, proteolytically cleaved by caspase-3 (CASP3) and caspase-7 (CASP7) in response to apoptosis to generate the Poly [ADP-ribose] polymerase 1, processed N-terminus and Poly [ADP-ribose] polymerase 1, processed C-terminus forms. Sumoylated with SUMO1 or SUMO2 by PIAS4 following prolonged residence (trapping) to chromatin. Sumoylation promotes ubiquitination by RNF4 and removal from chromatin by VCP/p97. Post-translationally, ubiquitinated by RNF4 following sumoylation by PIAS4 in response to prolonged residence (trapping) to chromatin. Ubiquitination promotes removal from chromatin by VCP/p97.

Its subcellular location is the chromosome. It is found in the nucleus. The protein resides in the nucleolus. The protein localises to the cytoplasm. It localises to the cytosol. It carries out the reaction NAD(+) + (ADP-D-ribosyl)n-acceptor = nicotinamide + (ADP-D-ribosyl)n+1-acceptor + H(+).. The enzyme catalyses L-seryl-[protein] + NAD(+) = O-(ADP-D-ribosyl)-L-seryl-[protein] + nicotinamide + H(+). It catalyses the reaction L-aspartyl-[protein] + NAD(+) = 4-O-(ADP-D-ribosyl)-L-aspartyl-[protein] + nicotinamide. The catalysed reaction is L-glutamyl-[protein] + NAD(+) = 5-O-(ADP-D-ribosyl)-L-glutamyl-[protein] + nicotinamide. It carries out the reaction L-tyrosyl-[protein] + NAD(+) = O-(ADP-D-ribosyl)-L-tyrosyl-[protein] + nicotinamide + H(+). The enzyme catalyses L-histidyl-[protein] + NAD(+) = N(tele)-(ADP-D-ribosyl)-L-histidyl-[protein] + nicotinamide + H(+). With respect to regulation, ADP-ribosyltransferase activity is regulated via an allosteric activation mechanism. In absence of activation signal, PARP1 is autoinhibited by the PARP alpha-helical domain (also named HD region), which prevents effective NAD(+)-binding. Activity is highly stimulated by signals, such as DNA strand breaks. Binding to damaged DNA unfolds the PARP alpha-helical domain, relieving autoinhibition. Poly-ADP-ribosyltransferase activity is tightly regulated and PARP1 is removed from damaged chromatin following initial poly-ADP-ribosylation of chromatin to avoid prolonged residence (trapping) that has cytotoxic consequences. A number of factors (VCP/p97) or post-translational modifications (auto-poly-ADP-ribosylation or ubiquitination) promote PARP1 removal from chromatin. Poly-ADP-ribosyltransferase that mediates poly-ADP-ribosylation of proteins and plays a key role in DNA repair. Mediates glutamate, aspartate, serine, histidine or tyrosine ADP-ribosylation of proteins: the ADP-D-ribosyl group of NAD(+) is transferred to the acceptor carboxyl group of target residues and further ADP-ribosyl groups are transferred to the 2'-position of the terminal adenosine moiety, building up a polymer with an average chain length of 20-30 units. Serine ADP-ribosylation of proteins constitutes the primary form of ADP-ribosylation of proteins in response to DNA damage. Specificity for the different amino acids is conferred by interacting factors, such as HPF1 and NMNAT1. Following interaction with HPF1, catalyzes serine ADP-ribosylation of target proteins; HPF1 confers serine specificity by completing the PARP1 active site. Also catalyzes tyrosine ADP-ribosylation of target proteins following interaction with HPF1. Following interaction with NMNAT1, catalyzes glutamate and aspartate ADP-ribosylation of target proteins; NMNAT1 confers glutamate and aspartate specificity. PARP1 initiates the repair of DNA breaks: recognizes and binds DNA breaks within chromatin and recruits HPF1, licensing serine ADP-ribosylation of target proteins, such as histones (H2BS6ADPr and H3S10ADPr), thereby promoting decompaction of chromatin and the recruitment of repair factors leading to the reparation of DNA strand breaks. HPF1 initiates serine ADP-ribosylation but restricts the polymerase activity of PARP1 in order to limit the length of poly-ADP-ribose chains. In addition to base excision repair (BER) pathway, also involved in double-strand breaks (DSBs) repair: together with TIMELESS, accumulates at DNA damage sites and promotes homologous recombination repair by mediating poly-ADP-ribosylation. Mediates the poly-ADP-ribosylation of a number of proteins, including itself, APLF, CHFR and NFAT5. In addition to proteins, also able to ADP-ribosylate DNA: catalyzes ADP-ribosylation of DNA strand break termini containing terminal phosphates and a 2'-OH group in single- and double-stranded DNA, respectively. Required for PARP9 and DTX3L recruitment to DNA damage sites. PARP1-dependent PARP9-DTX3L-mediated ubiquitination promotes the rapid and specific recruitment of 53BP1/TP53BP1, UIMC1/RAP80, and BRCA1 to DNA damage sites. PARP1-mediated DNA repair in neurons plays a role in sleep: senses DNA damage in neurons and promotes sleep, facilitating efficient DNA repair. In addition to DNA repair, also involved in other processes, such as transcription regulation, programmed cell death, membrane repair, adipogenesis and innate immunity. Acts as a repressor of transcription: binds to nucleosomes and modulates chromatin structure in a manner similar to histone H1, thereby altering RNA polymerase II. Acts both as a positive and negative regulator of transcription elongation, depending on the context. Acts as a positive regulator of transcription elongation by mediating poly-ADP-ribosylation of NELFE, preventing RNA-binding activity of NELFE and relieving transcription pausing. Acts as a negative regulator of transcription elongation in response to DNA damage by catalyzing poly-ADP-ribosylation of CCNT1, disrupting the phase separation activity of CCNT1 and subsequent activation of CDK9. Involved in replication fork progression following interaction with CARM1: mediates poly-ADP-ribosylation at replication forks, slowing fork progression. Poly-ADP-ribose chains generated by PARP1 also play a role in poly-ADP-ribose-dependent cell death, a process named parthanatos. Also acts as a negative regulator of the cGAS-STING pathway. Acts by mediating poly-ADP-ribosylation of CGAS: PARP1 translocates into the cytosol following phosphorylation by PRKDC and catalyzes poly-ADP-ribosylation and inactivation of CGAS. Acts as a negative regulator of adipogenesis: catalyzes poly-ADP-ribosylation of histone H2B on 'Glu-35' (H2BE35ADPr) following interaction with NMNAT1, inhibiting phosphorylation of H2B at 'Ser-36' (H2BS36ph), thereby blocking expression of pro-adipogenetic genes. Involved in the synthesis of ATP in the nucleus, together with NMNAT1, PARG and NUDT5. Nuclear ATP generation is required for extensive chromatin remodeling events that are energy-consuming. Functionally, promotes AIFM1-mediated apoptosis. This form, which translocates into the cytoplasm following cleavage by caspase-3 (CASP3) and caspase-7 (CASP7) in response to apoptosis, is auto-poly-ADP-ribosylated and serves as a poly-ADP-ribose carrier to induce AIFM1-mediated apoptosis. In terms of biological role, this cleavage form irreversibly binds to DNA breaks and interferes with DNA repair, promoting DNA damage-induced apoptosis. The protein is Poly [ADP-ribose] polymerase 1 (PARP1) of Bos taurus (Bovine).